A 1708-amino-acid chain; its full sequence is MTGAPPYNPQSPTQQPRFPVYSPPNKNRSYYPNNDQYQQHAPQTPPAFAPQPSLSRSPHYSHAPSPLPATLPPLNGGAPPPGHHPEPSSQYQTHSSAGTPQFSLPRPYSASMMSSNGASSYNHSTASHAHPSARLESLSQSPPKKETEPLYPIGGNGAPGYSSSMMREPRPASPPRETKHARAADPMSFASILSGPTEETSPIKQPSLPEALPGPATTITPAPPTLAPVPARRRLTPPPVTHALPPTSQLKVKEPEPISPAALPRLEKKPSAEKRRRNVEQEPKSAEALPVASTHGAFEPTKAARVSNRKTLTERDAEAINKIIAEIDNADKSDVESPGFEVEYGRYMVKSKKRALDAEKAEGIRRKRRRHDFLVKLGKTFEKQANAGVDRFRAANEASVIAEVQAKEIQDEKERKKDMQRKRRRENTVRLEMQKKLEAERKANKANDAAEKAKFLREAERAQRKIKSTKRALEGVTSPEEIGEVTPLAPNLEGGTTSSFHIGRSSPSRRKSGRSGTSRPKKSKEQKQAEKDAAEAAYAAMENDEPLPLAPKEDPRKETVKKEAKGARSKETTPAPVSAFESKGYNQIYEQIWRDIARKDIPKVYRIKTLSLSTRQENLRKTAQLASKQSRKWQERTNKSMKDTQARAKRTMREMMSFWKRNEREERDLRRLAEKQEIESAKKAEAEREANRQKRKLNFLISQTELYSHFIGRKIKGAGADSSGDTAVDGSDETIQPGKADHTIDLPPTVADVGAKVTNFEDLDFDAEDETALRQAALANAQNAVKEAQERARAFNAEENPMAALDEGELNFQNPTSLGDIEISQPKMLTAKLKEYQLKGLNWLVNLYEQGINGILADEMGLGKTIQSISVMAYLAEVHNIWGPFLVIAPASTLHNWQQEITKFVPDIKVLPYWGSAKDRKVLRKFWDRKHITYTKESEFHVLVTSYQLVVLDSQYFQKVKWQYMILDEAQAIKSSQSSRWKNLLGFHCRNRLLLTGTPIQNNMQELWALLHFIMPTLFDSHDEFSEWFSKDIESHAQSNTKLNEDQLRRLHMILKPFMLRRVKKHVQQELGDKVEKDVFCDLTYRQRAYYTNLRNRVSIMDLIEKAAVGDEADSTTLMNLVMQFRKVCNHPDLFERAETKSPFSVGYFAETASFVREGQNVDVRYSTRNLIEYNLPRLLCSPSGRIDMAGPGNEHAGFRGKYLQHLMNIFTPENIKRSIDEDGAFSFLRFADTSINEAYEQSHLGVFERAVRRRGQSNRLSHLNVIYDDEEDEKTSKFVLPHSLFNIVQRNDRQAVRNVTVEGYMRDLMNVSEATFERDGLGVIEPSASPAASAPPITISCSGQVALRETQDTFFNVSVRHALFSTPSRQMEQQILEKKLDPAPFSLPPMLPKPISTKGRYTHIEVPSMRRFVTDSGKLAKLDELLRELKAGGHRVLLYFQMTRMIDLMEEYLTYRNYKYCRLDGSTKLEDRRDTVADFQQRPEIFVFLLSTRAGGLGINLTAADTVIFYDSDWNPTIDSQAMDRAHRLGQTRQVTVYRLITRGTIEERIRKRALQKEEVQRVVISGGAAGGVDFNTRNRESRTKDIAMWLADDEQAELIEQKEKEALDRGEVFGAGKGGKKAAQKRKKDLTLDDMYHEGEGNFDDISAKPSGAATPVSTADNFGTPSSTPVPKRGRGRGNGKGSSKRAKTTTERLRLIDGDGGLES.

4 disordered regions span residues 1-312 (MTGA…RKTL), 408-581 (EIQD…SAFE), 626-648 (ASKQ…QARA), and 718-747 (AGAD…IDLP). 2 stretches are compositionally biased toward polar residues: residues 24 to 37 (PNKN…NDQY) and 88 to 102 (SSQY…TPQF). 2 stretches are compositionally biased toward low complexity: residues 108–122 (YSAS…SSYN) and 211–220 (ALPGPATTIT). 3 stretches are compositionally biased toward basic and acidic residues: residues 265 to 285 (RLEK…EPKS), 408 to 417 (EIQDEKERKK), and 426 to 463 (ENTV…ERAQ). The stretch at 395 to 478 (ANEASVIAEV…TKRALEGVTS (84 aa)) forms a coiled coil. The span at 507–522 (PSRRKSGRSGTSRPKK) shows a compositional bias: basic residues. Basic and acidic residues-rich tracts occupy residues 523–534 (SKEQKQAEKDAA), 551–571 (PKED…RSKE), and 632–646 (KWQE…DTQA). The 126-residue stretch at 592-717 (IWRDIARKDI…SHFIGRKIKG (126 aa)) folds into the DBINO domain. Residues 634-706 (QERTNKSMKD…LNFLISQTEL (73 aa)) are a coiled coil. The 173-residue stretch at 845 to 1017 (VNLYEQGING…WALLHFIMPT (173 aa)) folds into the Helicase ATP-binding domain. Residue 858–865 (DEMGLGKT) participates in ATP binding. The short motif at 968–971 (DEAQ) is the DEAQ box element. The Helicase C-terminal domain maps to 1422 to 1582 (KLDELLRELK…GVDFNTRNRE (161 aa)). Positions 1643–1708 (GNFDDISAKP…LIDGDGGLES (66 aa)) are disordered. Residues 1658–1672 (PVSTADNFGTPSSTP) are compositionally biased toward polar residues. Over residues 1675–1691 (KRGRGRGNGKGSSKRAK) the composition is skewed to basic residues. Residues 1692–1701 (TTTERLRLID) are compositionally biased toward basic and acidic residues.

Belongs to the SNF2/RAD54 helicase family. As to quaternary structure, component of the INO80 chromatin-remodeling complex.

It localises to the nucleus. The catalysed reaction is ATP + H2O = ADP + phosphate + H(+). In terms of biological role, ATPase component of the INO80 complex which remodels chromatin by shifting nucleosomes and is involved in DNA repair. This chain is Chromatin-remodeling ATPase INO80 (ino80), found in Aspergillus fumigatus (strain ATCC MYA-4609 / CBS 101355 / FGSC A1100 / Af293) (Neosartorya fumigata).